Reading from the N-terminus, the 398-residue chain is Cysteine desulfurase 2 (398 aa).

Residues 71-72 (GT), asparagine 150, glutamine 178, and 198-200 (SGH) contribute to the pyridoxal 5'-phosphate site. Residue lysine 201 is modified to N6-(pyridoxal phosphate)lysine. Position 236 (threonine 236) interacts with pyridoxal 5'-phosphate. Cysteine 323 serves as the catalytic Cysteine persulfide intermediate. Position 323 (cysteine 323) interacts with [2Fe-2S] cluster.

This sequence belongs to the class-V pyridoxal-phosphate-dependent aminotransferase family. NifS/IscS subfamily. Homodimer. Requires pyridoxal 5'-phosphate as cofactor.

The enzyme catalyses (sulfur carrier)-H + L-cysteine = (sulfur carrier)-SH + L-alanine. Its function is as follows. Catalyzes the removal of elemental sulfur atoms from cysteine to produce alanine. Seems to participate in the biosynthesis of the nitrogenase metalloclusters by providing the inorganic sulfur required for the Fe-S core formation. The chain is Cysteine desulfurase 2 from Trichormus variabilis (strain ATCC 29413 / PCC 7937) (Anabaena variabilis).